The sequence spans 894 residues: Microsomal triglyceride transfer protein large subunit (894 aa).

The first 21 residues, 1 to 21, serve as a signal peptide directing secretion; it reads MILLAVLFLCFFSSYSASVKG. The region spanning 28-658 is the Vitellogenin domain; the sequence is LNNERLYKLT…IFQYIGKAEL (631 aa). A disulfide bridge connects residues Cys-174 and Cys-194.

As to quaternary structure, interacts with PRAP1. In terms of assembly, heterodimer; heterodimerizes with the protein disulfide isomerase (P4HB/PDI). Interacts with APOB. Heterodimer; heterodimerizes with the protein disulfide isomerase (P4HB/PDI). Cleaved by signal peptidase between residues Gln-33 and Asn-34. As to expression, mainly expressed in the intestine and the liver, and at lower levels in white and brown fat cells. Expressed in heart. In terms of tissue distribution, ubiquitous, and is the major isoform in hematopoietic cells and adipocytes.

It localises to the endoplasmic reticulum. It is found in the golgi apparatus. It catalyses the reaction a 1,2-diacyl-sn-glycero-3-phosphocholine(in) = a 1,2-diacyl-sn-glycero-3-phosphocholine(out). The catalysed reaction is a 1,2-diacyl-sn-glycero-3-phosphoethanolamine(in) = a 1,2-diacyl-sn-glycero-3-phosphoethanolamine(out). It carries out the reaction a cholesterol ester(in) = a cholesterol ester(out). The enzyme catalyses a triacyl-sn-glycerol(in) = a triacyl-sn-glycerol(out). Its function is as follows. Catalyzes the transport of triglyceride, cholesteryl ester, and phospholipid between phospholipid surfaces. Required for the assembly and secretion of plasma lipoproteins that contain apolipoprotein B. May be involved in regulating cholesteryl ester biosynthesis in cells that produce lipoproteins. In terms of biological role, critical for the development of natural killer T (NKT) cells. Required for the assembly and secretion of plasma lipoproteins that contain apolipoprotein B. In Mus musculus (Mouse), this protein is Microsomal triglyceride transfer protein large subunit (Mttp).